The primary structure comprises 106 residues: Hydrogenase expression/formation protein HoxL (106 aa).

The protein belongs to the HupF/HypC family.

The protein is Hydrogenase expression/formation protein HoxL (hoxL) of Azotobacter vinelandii.